Reading from the N-terminus, the 167-residue chain is Cofilin-2 (167 aa).

In terms of domain architecture, ADF-H spans 4-153; sequence GVTVNDEVIK…KDRCTLADKL (150 aa). A Nuclear localization signal motif is present at residues 30–34; sequence KKRKK.

Belongs to the actin-binding proteins ADF family.

The protein resides in the nucleus matrix. Its subcellular location is the cytoplasm. It localises to the cytoskeleton. In terms of biological role, controls reversibly actin polymerization and depolymerization in a pH-sensitive manner. It has the ability to bind G- and F-actin in a 1:1 ratio of cofilin to actin. It is the major component of intranuclear and cytoplasmic actin rods. This Xenopus tropicalis (Western clawed frog) protein is Cofilin-2 (cfl2).